The primary structure comprises 555 residues: Dihydroxy-acid dehydratase (555 aa).

D78 serves as a coordination point for Mg(2+). C119 contributes to the [2Fe-2S] cluster binding site. The Mg(2+) site is built by D120 and K121. An N6-carboxylysine modification is found at K121. [2Fe-2S] cluster is bound at residue C191. A Mg(2+)-binding site is contributed by E444. Residue S470 is the Proton acceptor of the active site.

Belongs to the IlvD/Edd family. As to quaternary structure, homodimer. The cofactor is [2Fe-2S] cluster. Mg(2+) serves as cofactor.

It carries out the reaction (2R)-2,3-dihydroxy-3-methylbutanoate = 3-methyl-2-oxobutanoate + H2O. It catalyses the reaction (2R,3R)-2,3-dihydroxy-3-methylpentanoate = (S)-3-methyl-2-oxopentanoate + H2O. It functions in the pathway amino-acid biosynthesis; L-isoleucine biosynthesis; L-isoleucine from 2-oxobutanoate: step 3/4. Its pathway is amino-acid biosynthesis; L-valine biosynthesis; L-valine from pyruvate: step 3/4. In terms of biological role, functions in the biosynthesis of branched-chain amino acids. Catalyzes the dehydration of (2R,3R)-2,3-dihydroxy-3-methylpentanoate (2,3-dihydroxy-3-methylvalerate) into 2-oxo-3-methylpentanoate (2-oxo-3-methylvalerate) and of (2R)-2,3-dihydroxy-3-methylbutanoate (2,3-dihydroxyisovalerate) into 2-oxo-3-methylbutanoate (2-oxoisovalerate), the penultimate precursor to L-isoleucine and L-valine, respectively. The chain is Dihydroxy-acid dehydratase from Nitratidesulfovibrio vulgaris (strain DSM 19637 / Miyazaki F) (Desulfovibrio vulgaris).